A 313-amino-acid polypeptide reads, in one-letter code: Protein-glutamine deamidase Cif (313 aa).

Residues C128, H186, and Q205 contribute to the active site.

Belongs to the Cif family.

The protein resides in the secreted. It localises to the host nucleus. It catalyses the reaction L-glutaminyl-[protein] + H2O = L-glutamyl-[protein] + NH4(+). Functionally, protein-glutamine deamidase effector that inhibits the host cell cycle and other key cellular processes such as the actin network and programmed-cell death. Acts by mediating the side chain deamidation of 'Gln-40' of host NEDD8, converting it to glutamate, thereby abolishing the activity of cullin-RING-based E3 ubiquitin-protein ligase complexes (CRL complexes). Inactivation of CRL complexes prevents ubiquitination and subsequent degradation of the cyclin-dependent kinase inhibitors CDKN1A/p21 and CDKN1B/p27, leading to G1 and G2 cell cycle arrests in host cells. Deamidation of 'Gln-40' of host NEDD8 also triggers macrophage-specific programmed cell death. Also able to catalyze deamidation of 'Gln-40' of host ubiquitin in vitro; however, NEDD8 constitutes the preferred substrate in vivo. In Photorhabdus laumondii subsp. laumondii (strain DSM 15139 / CIP 105565 / TT01) (Photorhabdus luminescens subsp. laumondii), this protein is Protein-glutamine deamidase Cif.